A 560-amino-acid polypeptide reads, in one-letter code: MNIDVVQLLDQNPILLIFVVLAIGLAIGKIRFGNLQLGNSIGVLITSLIMGHLGFSFNAEALTIGFMLFIYCVGIEAGPNFFGIFFRDGKHYFILSMTVLVAAVSLTYGLSHYFGLDFGLSAGMMAGALTATPVLVGAQDALNSGLATIPRNMDFSLVLENLSVGYAMAYLIGLISMIMFAKLLPKLQKQNLSDSAQQIAQERGLGNSSQRKVYLPIIRAYRVGPELIDWTDGKNLRELGIYRQTGCYIERIRRNGILAHPDGDAILQEGDEIALVGFPDSHARLDPSFRNGKEVFDRNLLDLRIVEEEIVVKSDAIAGKRLSDLNLSEFGCFLNRVVRAQIEMPMDLDIVLAKGDVLQVSGEKSRVHGLAEKIGFISIHSQMADLLAFCSFFILGIMFGLVTMTFGQVSFSLGNAVGLLLSGITLGFLRANHPTFGYVPQGALNMVKDLGLMFFMVGIGLSAGGKMFEHLTQVGPQVIGLAFIVSVVPVVIAYLVGAYILKMNRALLFGAIIGARTCAPAMDVVNEYAKSTIPALGYAGTYAIANILMTLAGTILIILS.

The next 5 membrane-spanning stretches (helical) occupy residues 8–28 (LLDQNPILLIFVVLAIGLAIG), 37–57 (LGNSIGVLITSLIMGHLGFSF), 66–86 (FMLFIYCVGIEAGPNFFGIFF), 91–111 (HYFILSMTVLVAAVSLTYGLS), and 164–184 (VGYAMAYLIGLISMIMFAKLL). 2 RCK C-terminal domains span residues 205–292 (LGNS…FRNG) and 293–376 (KEVF…KIGF). A run of 6 helical transmembrane segments spans residues 386 to 406 (LLAFCSFFILGIMFGLVTMTF), 409 to 429 (VSFSLGNAVGLLLSGITLGFL), 443 to 463 (ALNMVKDLGLMFFMVGIGLSA), 478 to 498 (VIGLAFIVSVVPVVIAYLVGA), 506 to 526 (ALLFGAIIGARTCAPAMDVVN), and 539 to 559 (AGTYAIANILMTLAGTILIIL).

The protein belongs to the AAE transporter (TC 2.A.81) family. YbjL subfamily.

The protein localises to the cell membrane. The polypeptide is Putative transport protein VP1232 (Vibrio parahaemolyticus serotype O3:K6 (strain RIMD 2210633)).